Consider the following 374-residue polypeptide: Beta-1,3-N-acetylglucosaminyltransferase lunatic fringe (374 aa).

Residues 1–8 (MLKTYRGK) are Cytoplasmic-facing. Residues 9–29 (VVVSLAGATVTCLGFLLFLSQ) traverse the membrane as a helical; Signal-anchor for type II membrane protein segment. The Lumenal portion of the chain corresponds to 30–374 (HQRIQADGMQ…TPWCPPQVAY (345 aa)). N-linked (GlcNAc...) asparagine glycosylation is present at Asn-40. A disordered region spans residues 80–100 (RSRREADKPSEAPGAATDAPP). Substrate is bound at residue Arg-123. Residue Asn-162 is glycosylated (N-linked (GlcNAc...) asparagine). Intrachain disulfides connect Cys-163/Cys-174 and Cys-192/Cys-255. Asp-196 contributes to the substrate binding site. Residue Asp-197 participates in Mn(2+) binding. Asp-285 is a catalytic residue. His-309 serves as a coordination point for Mn(2+). A disulfide bond links Cys-359 and Cys-368.

Belongs to the glycosyltransferase 31 family. Requires Mn(2+) as cofactor. Co(2+) serves as cofactor. In terms of processing, a soluble form may be derived from the membrane form by proteolytic processing. In terms of tissue distribution, in the embryo, expressed along the A-P axis of the neural tube, within the lateral plate mesoderm, in the presomitic mesoderm and the somites, in specific rhombomeres of the hindbrain (even-numbered rhombomeres) and in the otic vesicles.

The protein localises to the golgi apparatus membrane. It catalyses the reaction 3-O-(alpha-L-fucosyl)-L-threonyl-[EGF-like domain protein] + UDP-N-acetyl-alpha-D-glucosamine = 3-O-(N-acetyl-beta-D-glucosaminyl-(1-&gt;3)-alpha-L-fucosyl)-L-threonyl-[EGF-like domain protein] + UDP + H(+). It carries out the reaction 3-O-(alpha-L-fucosyl)-L-seryl-[EGF-like domain protein] + UDP-N-acetyl-alpha-D-glucosamine = 3-O-(N-acetyl-beta-D-glucosaminyl-(1-&gt;3)-alpha-L-fucosyl)-L-seryl-[EGF-like domain protein] + UDP + H(+). In terms of biological role, glycosyltransferase that initiates the elongation of O-linked fucose residues attached to EGF-like repeats in the extracellular domain of Notch molecules. Involved in the correct formation of boundaries in the somites and hindbrain. Required for Delta-Notch-mediated induction of hypochord cells at the lateral borders of the midline precursor domain. This is Beta-1,3-N-acetylglucosaminyltransferase lunatic fringe (lfng) from Danio rerio (Zebrafish).